Consider the following 1485-residue polypeptide: Putative E3 ubiquitin-protein ligase LIN-2 (1485 aa).

Over residues 337-353 (EENEDDSDSELDNESVD) the composition is skewed to acidic residues. Disordered stretches follow at residues 337 to 363 (EENE…IFSP), 384 to 450 (NQIP…ISNA), and 462 to 507 (RKND…KLSM). Over residues 438–450 (SSPDISIDNISNA) the composition is skewed to low complexity. Residues 466–484 (SQTPSMNQDNENSLVLNDS) show a composition bias toward polar residues. A U-box domain is found at 510 to 585 (KPPKDFVCPI…TSWKEQNPEL (76 aa)). WD repeat units lie at residues 1194 to 1232 (SCKE…KVCD), 1246 to 1283 (EHTK…IKCI), 1409 to 1448 (SLST…RVAS), and 1454 to 1485 (GHTK…WALD).

It carries out the reaction S-ubiquitinyl-[E2 ubiquitin-conjugating enzyme]-L-cysteine + [acceptor protein]-L-lysine = [E2 ubiquitin-conjugating enzyme]-L-cysteine + N(6)-ubiquitinyl-[acceptor protein]-L-lysine.. It participates in protein modification; protein ubiquitination. In terms of biological role, putative E3 ubiquitin-protein ligase involved in the rhizobial infection process. Plays an important role in the early steps of infection thread formation and in growth and differentiation of nodules. This Lotus japonicus (Lotus corniculatus var. japonicus) protein is Putative E3 ubiquitin-protein ligase LIN-2.